The sequence spans 90 residues: DNA-directed RNA polymerase subunit omega (90 aa).

This sequence belongs to the RNA polymerase subunit omega family. In terms of assembly, the RNAP catalytic core consists of 2 alpha, 1 beta, 1 beta' and 1 omega subunit. When a sigma factor is associated with the core the holoenzyme is formed, which can initiate transcription.

It carries out the reaction RNA(n) + a ribonucleoside 5'-triphosphate = RNA(n+1) + diphosphate. Its function is as follows. Promotes RNA polymerase assembly. Latches the N- and C-terminal regions of the beta' subunit thereby facilitating its interaction with the beta and alpha subunits. In Saccharophagus degradans (strain 2-40 / ATCC 43961 / DSM 17024), this protein is DNA-directed RNA polymerase subunit omega.